A 98-amino-acid chain; its full sequence is Small ribosomal subunit protein uS19 (98 aa).

Residues 77 to 98 (TRTFRGHAGGKAEKGGSAPKKK) form a disordered region.

The protein belongs to the universal ribosomal protein uS19 family.

Functionally, protein S19 forms a complex with S13 that binds strongly to the 16S ribosomal RNA. This Chlorobium phaeobacteroides (strain DSM 266 / SMG 266 / 2430) protein is Small ribosomal subunit protein uS19.